The primary structure comprises 376 residues: Carbamoyl phosphate synthase small chain (376 aa).

The CPSase stretch occupies residues 1 to 183; sequence MSKAVLVLED…PDGPPGVSRF (183 aa). Residues S46, G232, and G234 each contribute to the L-glutamine site. The region spanning 184–376 is the Glutamine amidotransferase type-1 domain; that stretch reads TVAALDLGIK…FVELMAGEGR (193 aa). C260 functions as the Nucleophile in the catalytic mechanism. L-glutamine contacts are provided by F261, Q264, N302, G304, and F305. Residues H350 and E352 contribute to the active site.

Belongs to the CarA family. Composed of two chains; the small (or glutamine) chain promotes the hydrolysis of glutamine to ammonia, which is used by the large (or ammonia) chain to synthesize carbamoyl phosphate. Tetramer of heterodimers (alpha,beta)4.

The catalysed reaction is hydrogencarbonate + L-glutamine + 2 ATP + H2O = carbamoyl phosphate + L-glutamate + 2 ADP + phosphate + 2 H(+). The enzyme catalyses L-glutamine + H2O = L-glutamate + NH4(+). It functions in the pathway amino-acid biosynthesis; L-arginine biosynthesis; carbamoyl phosphate from bicarbonate: step 1/1. The protein operates within pyrimidine metabolism; UMP biosynthesis via de novo pathway; (S)-dihydroorotate from bicarbonate: step 1/3. Its function is as follows. Small subunit of the glutamine-dependent carbamoyl phosphate synthetase (CPSase). CPSase catalyzes the formation of carbamoyl phosphate from the ammonia moiety of glutamine, carbonate, and phosphate donated by ATP, constituting the first step of 2 biosynthetic pathways, one leading to arginine and/or urea and the other to pyrimidine nucleotides. The small subunit (glutamine amidotransferase) binds and cleaves glutamine to supply the large subunit with the substrate ammonia. The chain is Carbamoyl phosphate synthase small chain from Mycobacterium bovis (strain ATCC BAA-935 / AF2122/97).